The sequence spans 358 residues: Cytoplasmic dynein 2 light intermediate chain 1 (358 aa).

Disordered regions lie at residues 1-35 (MPKV…EDAH) and 307-358 (ESTR…ALDP). The segment covering 24–33 (TDEEEAEEED) has biased composition (acidic residues). Basic and acidic residues-rich tracts occupy residues 307–320 (ESTR…DPVK) and 333–349 (RAQK…EQAK).

It belongs to the dynein light intermediate chain family. Light intermediate chain of the cytoplasmic dynein complex 2, a multisubunit complex composed at least of eleven different proteins. The cytoplasmic dynein 2 complex consists of two catalytic heavy chains (HCs) and a number of non-catalytic subunits presented by intermediate chains (ICs), light intermediate chains (LICs) and light chains (LCs). Among them, a heavy chain (DYNC2H1), two intermediate chains (DYNC2I2 and DYNC2I1), a light intermediate chain (DYNC2LI1), and a light chain (DYNLT2B) are unique to the dynein-2 complex, but a subset of light chains are also shared by dynein-1 and dynein-2 complexes. Dynein-2 complex is built around two copies of cytoplasmic dynein 2 heavy chain 1 (DYNC2H1). The C-terminal region forms the motor domain, which converts the energy from ATP hydrolysis into movement. Its N-terminal region forms the tail, an extended structure that binds the other subunits and holds the two heavy chains in a homodimer.

Its subcellular location is the cytoplasm. It is found in the cell projection. It localises to the cilium. The protein localises to the cytoskeleton. The protein resides in the cilium basal body. Its subcellular location is the cilium axoneme. It is found in the microtubule organizing center. It localises to the centrosome. In terms of biological role, acts as one of several non-catalytic accessory components of the cytoplasmic dynein 2 complex (dynein-2 complex), a motor protein complex that drives the movement of cargos along microtubules within cilia and flagella in concert with the intraflagellar transport (IFT) system, facilitating the assembly of these organelles. This chain is Cytoplasmic dynein 2 light intermediate chain 1 (dync2li1), found in Danio rerio (Zebrafish).